Reading from the N-terminus, the 493-residue chain is Probable fatty acyl-CoA reductase 4 (493 aa).

It belongs to the fatty acyl-CoA reductase family. In terms of tissue distribution, expressed in the endodermal cell layer surrounding the central vasculature in roots. Expressed in the hilum region of seeds. Expressed in stamen filaments and receptacle of siliques.

The enzyme catalyses a long-chain fatty acyl-CoA + 2 NADPH + 2 H(+) = a long-chain primary fatty alcohol + 2 NADP(+) + CoA. Catalyzes the reduction of fatty acyl-CoA to fatty alcohols. Catalyzes specifically the formation of C18:0 and C20:0 fatty alcohols. Provides the fatty alcohols required for synthesis of suberin in roots, seed coat and wound-induced leaf tissue. Provides the fatty alcohols required for synthesis of alkyl hydroxycinnamates in root waxes. The chain is Probable fatty acyl-CoA reductase 4 from Arabidopsis thaliana (Mouse-ear cress).